A 162-amino-acid chain; its full sequence is Ribosome maturation factor RimP (162 aa).

The protein belongs to the RimP family.

It localises to the cytoplasm. Functionally, required for maturation of 30S ribosomal subunits. The chain is Ribosome maturation factor RimP from Streptococcus gordonii (strain Challis / ATCC 35105 / BCRC 15272 / CH1 / DL1 / V288).